The primary structure comprises 214 residues: Large ribosomal subunit protein uL1 (214 aa).

This sequence belongs to the universal ribosomal protein uL1 family. In terms of assembly, part of the 50S ribosomal subunit.

Functionally, binds directly to 23S rRNA. Probably involved in E site tRNA release. In terms of biological role, protein L1 is also a translational repressor protein, it controls the translation of its operon by binding to its mRNA. This chain is Large ribosomal subunit protein uL1, found in Methanoregula boonei (strain DSM 21154 / JCM 14090 / 6A8).